A 430-amino-acid polypeptide reads, in one-letter code: Phosphoribosylamine--glycine ligase (430 aa).

Residues 109 to 316 enclose the ATP-grasp domain; that stretch reads KDFMARHGIP…LLDLIEAALN (208 aa). 135–196 contributes to the ATP binding site; it reads VRQQGAPIVI…EEYLDGEEAS (62 aa). Glu-286 and Asn-288 together coordinate Mg(2+).

This sequence belongs to the GARS family. The cofactor is Mg(2+). It depends on Mn(2+) as a cofactor.

The enzyme catalyses 5-phospho-beta-D-ribosylamine + glycine + ATP = N(1)-(5-phospho-beta-D-ribosyl)glycinamide + ADP + phosphate + H(+). Its pathway is purine metabolism; IMP biosynthesis via de novo pathway; N(1)-(5-phospho-D-ribosyl)glycinamide from 5-phospho-alpha-D-ribose 1-diphosphate: step 2/2. The chain is Phosphoribosylamine--glycine ligase from Xylella fastidiosa (strain Temecula1 / ATCC 700964).